Reading from the N-terminus, the 400-residue chain is Enoyl-[acyl-carrier-protein] reductase [NADH] (400 aa).

NAD(+)-binding positions include 48–53 (GSSSGY), 74–75 (FE), 111–112 (DA), and 139–140 (LA). Y225 serves as a coordination point for substrate. The Proton donor role is filled by Y235. Residues K244 and 273–275 (VVT) each bind NAD(+).

This sequence belongs to the TER reductase family. As to quaternary structure, monomer.

It carries out the reaction a 2,3-saturated acyl-[ACP] + NAD(+) = a (2E)-enoyl-[ACP] + NADH + H(+). It participates in lipid metabolism; fatty acid biosynthesis. Involved in the final reduction of the elongation cycle of fatty acid synthesis (FAS II). Catalyzes the reduction of a carbon-carbon double bond in an enoyl moiety that is covalently linked to an acyl carrier protein (ACP). In Shewanella woodyi (strain ATCC 51908 / MS32), this protein is Enoyl-[acyl-carrier-protein] reductase [NADH].